Here is a 293-residue protein sequence, read N- to C-terminus: MEKSTWTTKVGLAQMLKGGVIMDVVTPEQARIAEEAGAVAVMALERVPADIRAQGGVARMSDPELILAIKQAVTIPVMAKARIGHFVEAQVLEAIGVDYIDESEVLTPADEEHHINKHKFRVPFVCGCRNLGEALRRVAEGAAMLRTKGEAGTGNVVEAVRHARAVYSEIRRLQSMNEDELFTYAKQIQAPYELVKQVATEGKLPVVNFAAGGIATPADAALLMQLGVDGIFVGSGIFKSGDPVKRARAIVEATTHYNDPEIIAEVSKGLGEAMVGINIDQIPADQLMARRGW.

Asp23 is a binding site for D-ribose 5-phosphate. Catalysis depends on Lys80, which acts as the Schiff-base intermediate with D-ribose 5-phosphate. Gly152 is a D-ribose 5-phosphate binding site. Arg164 is a binding site for D-glyceraldehyde 3-phosphate. D-ribose 5-phosphate contacts are provided by residues Gly213 and 234–235 (GS).

Belongs to the PdxS/SNZ family. In terms of assembly, in the presence of PdxT, forms a dodecamer of heterodimers.

It catalyses the reaction aldehydo-D-ribose 5-phosphate + D-glyceraldehyde 3-phosphate + L-glutamine = pyridoxal 5'-phosphate + L-glutamate + phosphate + 3 H2O + H(+). It participates in cofactor biosynthesis; pyridoxal 5'-phosphate biosynthesis. Its function is as follows. Catalyzes the formation of pyridoxal 5'-phosphate from ribose 5-phosphate (RBP), glyceraldehyde 3-phosphate (G3P) and ammonia. The ammonia is provided by the PdxT subunit. Can also use ribulose 5-phosphate and dihydroxyacetone phosphate as substrates, resulting from enzyme-catalyzed isomerization of RBP and G3P, respectively. This chain is Pyridoxal 5'-phosphate synthase subunit PdxS, found in Chloroflexus aurantiacus (strain ATCC 29366 / DSM 635 / J-10-fl).